The following is a 145-amino-acid chain: Ribonuclease P protein component (145 aa).

The tract at residues 121 to 145 is disordered; the sequence is PAAAGTMPPARTVHPSSLSPTEPEL. Over residues 134–145 the composition is skewed to polar residues; sequence HPSSLSPTEPEL.

This sequence belongs to the RnpA family. Consists of a catalytic RNA component (M1 or rnpB) and a protein subunit.

It carries out the reaction Endonucleolytic cleavage of RNA, removing 5'-extranucleotides from tRNA precursor.. In terms of biological role, RNaseP catalyzes the removal of the 5'-leader sequence from pre-tRNA to produce the mature 5'-terminus. It can also cleave other RNA substrates such as 4.5S RNA. The protein component plays an auxiliary but essential role in vivo by binding to the 5'-leader sequence and broadening the substrate specificity of the ribozyme. The sequence is that of Ribonuclease P protein component from Xanthomonas axonopodis pv. citri (strain 306).